A 454-amino-acid polypeptide reads, in one-letter code: Allantoinase (454 aa).

Residues H60, H62, K147, H183, H239, and D312 each coordinate Zn(2+). K147 bears the N6-carboxylysine mark.

Belongs to the metallo-dependent hydrolases superfamily. Allantoinase family. Homotetramer. Zn(2+) is required as a cofactor. Carboxylation allows a single lysine to coordinate two zinc ions.

The catalysed reaction is (S)-allantoin + H2O = allantoate + H(+). It functions in the pathway nitrogen metabolism; (S)-allantoin degradation; allantoate from (S)-allantoin: step 1/1. Functionally, catalyzes the conversion of allantoin (5-ureidohydantoin) to allantoic acid by hydrolytic cleavage of the five-member hydantoin ring. The protein is Allantoinase of Bacillus velezensis (strain DSM 23117 / BGSC 10A6 / LMG 26770 / FZB42) (Bacillus amyloliquefaciens subsp. plantarum).